The primary structure comprises 283 residues: Alpha-ketoglutarate-dependent taurine dioxygenase (283 aa).

Residues His70, Tyr73, and Asn95 each contribute to the taurine site. Residues His99 and Asp101 each coordinate Fe cation. Taurine is bound at residue Val102. Position 126 (Thr126) interacts with 2-oxoglutarate. 3-hydroxytryptophan; by autocatalysis is present on residues Trp128, Trp240, and Trp248. His255 contacts Fe cation. 2-oxoglutarate is bound by residues His255, Arg266, and Arg270. Residue Arg270 participates in taurine binding.

Belongs to the TfdA dioxygenase family. In terms of assembly, homodimer. Was later shown to be a homotetramer arranged as a dimer of two dimers. Requires Fe(2+) as cofactor.

The enzyme catalyses taurine + 2-oxoglutarate + O2 = aminoacetaldehyde + sulfite + succinate + CO2 + H(+). The protein operates within organosulfur degradation; taurine degradation via aerobic pathway; aminoacetaldehyde and sulfite from taurine: step 1/1. With respect to regulation, activated by ascorbate and inhibited by divalent metal ions such as zinc, copper and cobalt. Catalyzes the alpha-ketoglutarate-dependent hydroxylation of taurine yielding sulfite and aminoacetaldehyde after decomposition of an unstable intermediate. Is required for the utilization of taurine (2-aminoethanesulfonate) as an alternative sulfur source for growth in the absence of sulfate. To a lesser extent, pentanesulfonate, 3-(N-morpholino)propanesulfonate and 1,3-dioxo-2-isoindolineethanesulfonate are also desulfonated by this enzyme in vitro; however, desulfonation by TauD of organosulfonates other than taurine seem to be of little or no importance for sulfur metabolism in vivo. The protein is Alpha-ketoglutarate-dependent taurine dioxygenase (tauD) of Escherichia coli (strain K12).